The primary structure comprises 152 residues: SsrA-binding protein (152 aa).

The protein belongs to the SmpB family.

The protein resides in the cytoplasm. Its function is as follows. Required for rescue of stalled ribosomes mediated by trans-translation. Binds to transfer-messenger RNA (tmRNA), required for stable association of tmRNA with ribosomes. tmRNA and SmpB together mimic tRNA shape, replacing the anticodon stem-loop with SmpB. tmRNA is encoded by the ssrA gene; the 2 termini fold to resemble tRNA(Ala) and it encodes a 'tag peptide', a short internal open reading frame. During trans-translation Ala-aminoacylated tmRNA acts like a tRNA, entering the A-site of stalled ribosomes, displacing the stalled mRNA. The ribosome then switches to translate the ORF on the tmRNA; the nascent peptide is terminated with the 'tag peptide' encoded by the tmRNA and targeted for degradation. The ribosome is freed to recommence translation, which seems to be the essential function of trans-translation. The protein is SsrA-binding protein of Gloeobacter violaceus (strain ATCC 29082 / PCC 7421).